The following is a 122-amino-acid chain: UPF0102 protein Rleg2_4331 (122 aa).

This sequence belongs to the UPF0102 family.

This chain is UPF0102 protein Rleg2_4331, found in Rhizobium leguminosarum bv. trifolii (strain WSM2304).